A 466-amino-acid polypeptide reads, in one-letter code: Zinc finger and SCAN domain-containing protein 26 (466 aa).

Residue Lys-21 forms a Glycyl lysine isopeptide (Lys-Gly) (interchain with G-Cter in SUMO2) linkage. In terms of domain architecture, SCAN box spans 42 to 124 (CKQFRQLRYE…GILEDLQLDR (83 aa)). Composition is skewed to basic and acidic residues over residues 124 to 135 (RGKAGEQKDSAQ) and 163 to 173 (KPEERGKETRS). The disordered stretch occupies residues 124–182 (RGKAGEQKDSAQRSRPTVLVGEPAPRREAREQPGCALPQKPEERGKETRSENGNLIAGT). The C2H2-type 1; degenerate zinc-finger motif lies at 220–242 (SQCLETKERLVQNSGLIEHDRAH). C2H2-type zinc fingers lie at residues 270 to 292 (HPCQ…QKIH), 298 to 320 (YQCK…LRIH), 326 to 348 (YLCI…QKIH), 354 to 376 (RECK…QRVH), 382 to 404 (HHCN…HRIH), 410 to 432 (FKCN…VRIH), and 438 to 460 (YKCS…QRHH).

The protein localises to the nucleus. In terms of biological role, may be involved in transcriptional regulation. This Mus musculus (Mouse) protein is Zinc finger and SCAN domain-containing protein 26 (Zscan26).